A 275-amino-acid polypeptide reads, in one-letter code: Bis(5'-nucleosyl)-tetraphosphatase, symmetrical (275 aa).

This sequence belongs to the Ap4A hydrolase family.

It carries out the reaction P(1),P(4)-bis(5'-adenosyl) tetraphosphate + H2O = 2 ADP + 2 H(+). Functionally, hydrolyzes diadenosine 5',5'''-P1,P4-tetraphosphate to yield ADP. The chain is Bis(5'-nucleosyl)-tetraphosphatase, symmetrical from Actinobacillus succinogenes (strain ATCC 55618 / DSM 22257 / CCUG 43843 / 130Z).